The sequence spans 973 residues: Vacuolar protein sorting-associated protein 18 homolog (973 aa).

Position 2 is an N-acetylalanine (Ala-2). Phosphoserine occurs at positions 3, 11, and 13. Position 362 is an N6-acetyllysine (Lys-362). Residues 454-481 (EEIALKFLEARQEEALAEFLQRKLASLK) adopt a coiled-coil conformation. The CHCR repeat unit spans residues 618-772 (GSRLDARQLI…VVQEEEDVQT (155 aa)). Ser-689 is subject to Phosphoserine. The stretch at 802-848 (KEAICSSLKAYNHHIQELQREMEEATASAQRIRRDLQELRGRYGTVE) forms a coiled coil. The RING-type zinc finger occupies 853–947 (CATCDFPLLN…ELVAAECVYC (95 aa)). Residues 903–929 (GAAPPPAKGSARAKEAEGGAATAGPSR) are disordered. Ser-912 carries the phosphoserine modification.

It belongs to the VPS18 family. As to quaternary structure, core component of at least two putative endosomal tethering complexes, the homotypic fusion and vacuole protein sorting (HOPS) complex and the class C core vacuole/endosome tethering (CORVET) complex. Their common core is composed of the class C Vps proteins VPS11, VPS16, VPS18 and VPS33A, which in HOPS further associates with VPS39 and VPS41 and in CORVET with VPS8 and TGFBRAP1. Interacts with RAB5C. Interacts with HOOK1. Interacts with STX7, MON1B. Associates with adaptor protein complex 3 (AP-3) and clathrin:AP-3 complexes. Interacts with SYNPO2. Interacts with PLEKHM1. In terms of tissue distribution, ubiquitous. Expression was highest in heart and low in lung.

It is found in the late endosome membrane. It localises to the lysosome membrane. The protein localises to the early endosome. The protein resides in the cytoplasmic vesicle. Its subcellular location is the autophagosome. It is found in the clathrin-coated vesicle. Its function is as follows. Plays a role in vesicle-mediated protein trafficking to lysosomal compartments including the endocytic membrane transport and autophagic pathways. Believed to act as a core component of the putative HOPS and CORVET endosomal tethering complexes which are proposed to be involved in the Rab5-to-Rab7 endosome conversion probably implicating MON1A/B, and via binding SNAREs and SNARE complexes to mediate tethering and docking events during SNARE-mediated membrane fusion. The HOPS complex is proposed to be recruited to Rab7 on the late endosomal membrane and to regulate late endocytic, phagocytic and autophagic traffic towards lysosomes. The CORVET complex is proposed to function as a Rab5 effector to mediate early endosome fusion probably in specific endosome subpopulations. Required for fusion of endosomes and autophagosomes with lysosomes. Involved in dendrite development of Pukinje cells. This is Vacuolar protein sorting-associated protein 18 homolog from Homo sapiens (Human).